The chain runs to 469 residues: MVISVATPRRSIRDAVLGGVLGAGGRQLYQPLRCAFYDGAAGGGLTAALSEDGAEGGVPLPCGRKTAAAKNVLILMSDTGGGHRASAEALRDAFRLEFGDAYQVFVRDLGKEYGGWPLNDMERSYKFMIRHVRLWKVAFHGTSPRWVHGMYLAALAYFYANEVVAGIMRYNPDIIISVHPLMQHIPLWVLKWQSLHPKVPFVTVITDLNTCHPTWFHHGVTRCYCPSAEVAKRALLRGLEPSQIRVYGLPIRPSFCRAVLDKDELRKELDMDPDLPAVLLMGGGEGMGPVEETARALSDELYDRRRRRPVGQIVVICGRNQVLRSTLQSSRWNVPVKIRGFEKQMEKWMGACDCIITKAGPGTIAEALIRGLPIILNDFIPGQEVGNVPYVVDNGAGVFSKDPREAARQVARWFTTHTNELRRYSLNALKLAQPEAVFDIVKDIHKLQQQPATVTRIPYSLTSSFSYSI.

The N-terminal 42 residues, 1–42, are a transit peptide targeting the chloroplast; sequence MVISVATPRRSIRDAVLGGVLGAGGRQLYQPLRCAFYDGAAG.

This sequence belongs to the glycosyltransferase 28 family.

Its subcellular location is the plastid. It localises to the chloroplast membrane. The catalysed reaction is a 1,2-diacyl-sn-glycerol + UDP-alpha-D-galactose = a 1,2-diacyl-3-O-(beta-D-galactosyl)-sn-glycerol + UDP + H(+). Its function is as follows. Involved in the synthesis of the major structural component of photosynthetic membranes. This is Probable monogalactosyldiacylglycerol synthase 2, chloroplastic (MGD2) from Oryza sativa subsp. japonica (Rice).